A 517-amino-acid chain; its full sequence is Arp2/3 complex-activating protein rickA (517 aa).

Disordered stretches follow at residues 313-441 and 461-517; these read LENN…SKPA and KVSD…SFVR. 2 stretches are compositionally biased toward pro residues: residues 319–340 and 347–378; these read PPSP…PSPL and SSPP…PPMA. The WH2 domain occupies 406-423; it reads DTSDLMREIAGPKKLKKV. Residues 444–477 form a central and acidic domains region; sequence VNALSGLESIFARRAVIKVSDSSSSESDSGNWSD. Positions 463-479 are enriched in low complexity; that stretch reads SDSSSSESDSGNWSDVS. Residues 500–517 are compositionally biased toward polar residues; it reads THAQKINNRNSQNPSFVR.

In terms of assembly, homodimer.

It localises to the cell surface. Its function is as follows. Recruits and activates the Arp2/3 complex, which in turn leads to actin polymerization, promoting Rickettsia motility during infection. In Rickettsia conorii (strain ATCC VR-613 / Malish 7), this protein is Arp2/3 complex-activating protein rickA (rickA).